A 300-amino-acid chain; its full sequence is uncharacterized protein (300 aa).

The signal sequence occupies residues 1–22 (MKSFVWTLLGALSLGSLTTAYG).

Its subcellular location is the endoplasmic reticulum. This is an uncharacterized protein from Schizosaccharomyces pombe (strain 972 / ATCC 24843) (Fission yeast).